Consider the following 112-residue polypeptide: MVAAIIAGAAVAAAAYAGKYGIEAWQAFKLRPVRPRMRKFYEGGFQATMNRREAALILGVRESVAAEKVKEAHRRVMVANHPDAGGSHYLASKINEAKDMMLGKTKNSGSAF.

Residues Ala7 to Trp25 traverse the membrane as a helical segment. The 60-residue stretch at Glu53 to Phe112 folds into the J domain.

The protein belongs to the TIM14 family. In terms of assembly, probable component of the PAM complex at least composed of a mitochondrial HSP70 protein, TIMM44 and TIMM14. The complex interacts with the TIMM23 component of the TIM17:23 complex.

It localises to the mitochondrion. Its subcellular location is the mitochondrion inner membrane. Functionally, component of the PAM complex, a complex required for the translocation of transit peptide-containing proteins from the inner membrane into the mitochondrial matrix in an ATP-dependent manner. The polypeptide is Mitochondrial import inner membrane translocase subunit TIM14-2 (TIM14-2) (Arabidopsis thaliana (Mouse-ear cress)).